The primary structure comprises 389 residues: Succinate--CoA ligase [ADP-forming] subunit beta (389 aa).

The region spanning 9 to 236 (KELFAKHEVP…KDATDPLELK (228 aa)) is the ATP-grasp domain. ATP is bound by residues K45, 52–54 (GRG), S94, and E99. Positions 191 and 205 each coordinate Mg(2+). Residues N256 and 318–320 (GIT) each bind substrate.

It belongs to the succinate/malate CoA ligase beta subunit family. In terms of assembly, heterotetramer of two alpha and two beta subunits. The cofactor is Mg(2+).

The enzyme catalyses succinate + ATP + CoA = succinyl-CoA + ADP + phosphate. It carries out the reaction GTP + succinate + CoA = succinyl-CoA + GDP + phosphate. Its pathway is carbohydrate metabolism; tricarboxylic acid cycle; succinate from succinyl-CoA (ligase route): step 1/1. Succinyl-CoA synthetase functions in the citric acid cycle (TCA), coupling the hydrolysis of succinyl-CoA to the synthesis of either ATP or GTP and thus represents the only step of substrate-level phosphorylation in the TCA. The beta subunit provides nucleotide specificity of the enzyme and binds the substrate succinate, while the binding sites for coenzyme A and phosphate are found in the alpha subunit. In Rhodococcus opacus (strain B4), this protein is Succinate--CoA ligase [ADP-forming] subunit beta.